We begin with the raw amino-acid sequence, 365 residues long: 3-dehydroquinate synthase (365 aa).

Residues 106 to 110 (GVIGD), 130 to 131 (TT), Lys142, Lys151, and 169 to 172 (FFAT) contribute to the NAD(+) site. Residues Glu184, His247, and His264 each coordinate Zn(2+).

The protein belongs to the sugar phosphate cyclases superfamily. Dehydroquinate synthase family. The cofactor is NAD(+). Co(2+) serves as cofactor. Zn(2+) is required as a cofactor.

The protein localises to the cytoplasm. The enzyme catalyses 7-phospho-2-dehydro-3-deoxy-D-arabino-heptonate = 3-dehydroquinate + phosphate. It participates in metabolic intermediate biosynthesis; chorismate biosynthesis; chorismate from D-erythrose 4-phosphate and phosphoenolpyruvate: step 2/7. Functionally, catalyzes the conversion of 3-deoxy-D-arabino-heptulosonate 7-phosphate (DAHP) to dehydroquinate (DHQ). This chain is 3-dehydroquinate synthase, found in Listeria monocytogenes serovar 1/2a (strain ATCC BAA-679 / EGD-e).